The primary structure comprises 170 residues: Peptide deformylase (170 aa).

Fe cation-binding residues include C91 and H133. The active site involves E134. H137 provides a ligand contact to Fe cation.

Belongs to the polypeptide deformylase family. Fe(2+) serves as cofactor.

The enzyme catalyses N-terminal N-formyl-L-methionyl-[peptide] + H2O = N-terminal L-methionyl-[peptide] + formate. Its function is as follows. Removes the formyl group from the N-terminal Met of newly synthesized proteins. Requires at least a dipeptide for an efficient rate of reaction. N-terminal L-methionine is a prerequisite for activity but the enzyme has broad specificity at other positions. The protein is Peptide deformylase of Histophilus somni (strain 2336) (Haemophilus somnus).